Reading from the N-terminus, the 399-residue chain is 1-deoxy-D-xylulose 5-phosphate reductoisomerase (399 aa).

The NADPH site is built by Thr-10, Gly-11, Ser-12, Ile-13, and Asn-124. Lys-125 serves as a coordination point for 1-deoxy-D-xylulose 5-phosphate. Glu-126 is a binding site for NADPH. Asp-150 provides a ligand contact to Mn(2+). The 1-deoxy-D-xylulose 5-phosphate site is built by Ser-151, Glu-152, Ser-186, and His-209. Glu-152 is a binding site for Mn(2+). Gly-215 lines the NADPH pocket. 1-deoxy-D-xylulose 5-phosphate contacts are provided by Ser-222, Asn-227, Lys-228, and Glu-231. Glu-231 lines the Mn(2+) pocket.

The protein belongs to the DXR family. Mg(2+) is required as a cofactor. It depends on Mn(2+) as a cofactor.

The catalysed reaction is 2-C-methyl-D-erythritol 4-phosphate + NADP(+) = 1-deoxy-D-xylulose 5-phosphate + NADPH + H(+). It functions in the pathway isoprenoid biosynthesis; isopentenyl diphosphate biosynthesis via DXP pathway; isopentenyl diphosphate from 1-deoxy-D-xylulose 5-phosphate: step 1/6. In terms of biological role, catalyzes the NADPH-dependent rearrangement and reduction of 1-deoxy-D-xylulose-5-phosphate (DXP) to 2-C-methyl-D-erythritol 4-phosphate (MEP). The polypeptide is 1-deoxy-D-xylulose 5-phosphate reductoisomerase (Psychromonas ingrahamii (strain DSM 17664 / CCUG 51855 / 37)).